The primary structure comprises 155 residues: Lipoprotein signal peptidase (155 aa).

The next 2 helical transmembrane spans lie at 52-72 and 85-105; these read ILQGQMWFFYVITLVVIAGIV and LGVALALMLGGAIGNFIDRVF. Active-site residues include aspartate 111 and aspartate 129. Residues 124-144 traverse the membrane as a helical segment; sequence IFNIADSSLCVGVILLFIQML.

This sequence belongs to the peptidase A8 family.

The protein resides in the cell membrane. It catalyses the reaction Release of signal peptides from bacterial membrane prolipoproteins. Hydrolyzes -Xaa-Yaa-Zaa-|-(S,diacylglyceryl)Cys-, in which Xaa is hydrophobic (preferably Leu), and Yaa (Ala or Ser) and Zaa (Gly or Ala) have small, neutral side chains.. It functions in the pathway protein modification; lipoprotein biosynthesis (signal peptide cleavage). Functionally, this protein specifically catalyzes the removal of signal peptides from prolipoproteins. The polypeptide is Lipoprotein signal peptidase (Bacillus pumilus (strain SAFR-032)).